The following is a 754-amino-acid chain: 5-methyltetrahydropteroyltriglutamate--homocysteine methyltransferase (754 aa).

5-methyltetrahydropteroyltri-L-glutamate-binding positions include 17 to 20 and Lys117; that span reads RELK. Residues 431–433 and Glu484 contribute to the L-homocysteine site; that span reads IGS. Residues 431–433 and Glu484 contribute to the L-methionine site; that span reads IGS. 5-methyltetrahydropteroyltri-L-glutamate-binding positions include 515 to 516 and Trp561; that span reads RC. Residue Asp599 participates in L-homocysteine binding. Position 599 (Asp599) interacts with L-methionine. Glu605 serves as a coordination point for 5-methyltetrahydropteroyltri-L-glutamate. Positions 641, 643, and 665 each coordinate Zn(2+). The active-site Proton donor is the His694. Cys726 lines the Zn(2+) pocket.

It belongs to the vitamin-B12 independent methionine synthase family. It depends on Zn(2+) as a cofactor.

It carries out the reaction 5-methyltetrahydropteroyltri-L-glutamate + L-homocysteine = tetrahydropteroyltri-L-glutamate + L-methionine. It participates in amino-acid biosynthesis; L-methionine biosynthesis via de novo pathway; L-methionine from L-homocysteine (MetE route): step 1/1. Its function is as follows. Catalyzes the transfer of a methyl group from 5-methyltetrahydrofolate to homocysteine resulting in methionine formation. The polypeptide is 5-methyltetrahydropteroyltriglutamate--homocysteine methyltransferase (Salmonella paratyphi A (strain ATCC 9150 / SARB42)).